The primary structure comprises 703 residues: Methionine--tRNA ligase (703 aa).

A 'HIGH' region motif is present at residues proline 12–histidine 22. The Zn(2+) site is built by cysteine 143, cysteine 146, cysteine 156, and cysteine 159. A 'KMSKS' region motif is present at residues lysine 331–threonine 335. Lysine 334 lines the ATP pocket. Low complexity-rich tracts occupy residues alanine 556–glycine 568 and glutamate 577–serine 594. Disordered regions lie at residues alanine 556–serine 594 and glycine 682–lysine 703. One can recognise a tRNA-binding domain in the interval aspartate 602 to lysine 703.

The protein belongs to the class-I aminoacyl-tRNA synthetase family. MetG type 1 subfamily. In terms of assembly, homodimer. Zn(2+) is required as a cofactor.

It localises to the cytoplasm. The catalysed reaction is tRNA(Met) + L-methionine + ATP = L-methionyl-tRNA(Met) + AMP + diphosphate. Its function is as follows. Is required not only for elongation of protein synthesis but also for the initiation of all mRNA translation through initiator tRNA(fMet) aminoacylation. The chain is Methionine--tRNA ligase from Myxococcus xanthus (strain DK1622).